Consider the following 1857-residue polypeptide: Ankyrin repeat domain-containing protein 31 (1857 aa).

2 disordered regions span residues 1–30 (MENG…EDEE) and 195–215 (SEPG…DEES). The segment covering 195–207 (SEPGEEVTQTMTS) has biased composition (polar residues). 3 ANK repeats span residues 475–504 (FGEN…NVNQ), 508–537 (DGWT…DVNV), and 541–570 (YQIT…DPLF). Over residues 676 to 691 (KFGKSNLNSVKNSRTN) the composition is skewed to polar residues. Disordered stretches follow at residues 676–711 (KFGK…VDDR), 813–844 (VTTH…KGKA), 995–1038 (RDSS…TVVH), 1046–1065 (KAEK…NTDF), and 1075–1137 (ANSS…QNFR). Over residues 692–704 (VSKRKGQKNRQQK) the composition is skewed to basic residues. Positions 814–839 (TTHQQPHTNQEQYSSPYKSLGNNSSN) are enriched in polar residues. Residues 1008–1019 (SLERKQDTDKNY) are compositionally biased toward basic and acidic residues. The segment covering 1023–1032 (GPNTSSSSRP) has biased composition (polar residues). The segment covering 1082–1136 (QRKEKENVRKSDAELTHNDSEAERTLKSCEEKKKNMDSETHSPCDIQEHRKDQNF) has biased composition (basic and acidic residues). ANK repeat units lie at residues 1162–1191 (KGES…DVNL), 1195–1224 (AGWT…NVNC), and 1228–1257 (DGIV…NPNQ). Disordered regions lie at residues 1457–1479 (NSDI…AHAQ), 1540–1570 (GGLL…AENS), 1609–1640 (DPHS…AEPL), and 1663–1697 (AAAA…TTPR). The segment covering 1555 to 1570 (ASSSQPAALTPHAENS) has biased composition (polar residues). Residues 1663–1683 (AAAASHTDSTQSSLSSASAHQ) are compositionally biased toward low complexity. Residues 1687–1782 (KTVPHRNTTP…TYLGRELVKC (96 aa)) enclose the RAMA domain.

Interacts with REC114; the interaction is direct. Interacts with IHO1. Present in meiotic cells (at protein level).

It is found in the nucleus. Its subcellular location is the chromosome. Its function is as follows. Required for DNA double-strand breaks (DSBs) formation during meiotic recombination. Regulates the spatial and temporal patterns of pre-DSB recombinosome assembly and recombination activity by acting as a scaffold that anchors REC114 and other factors to specific genomic locations, thereby regulating DSB formation. Plays a key role in recombination in the pseudoautosomal regions of sex chromosomes. The protein is Ankyrin repeat domain-containing protein 31 of Mus musculus (Mouse).